Here is a 230-residue protein sequence, read N- to C-terminus: TorCAD operon transcriptional regulatory protein TorR (230 aa).

The Response regulatory domain occupies 4–117; that stretch reads HIVIVEDEPV…ELVVRVKNLL (114 aa). Asp-53 is modified (4-aspartylphosphate). A DNA-binding region (ompR/PhoB-type) is located at residues 132-227; that stretch reads DNCYRFAGYC…QHGEGYFLAA (96 aa).

Phosphorylated and dephosphorylated by TorS.

It localises to the cytoplasm. Member of the two-component regulatory system TorS/TorR involved in the anaerobic utilization of trimethylamine-N-oxide (TMAO). Phosphorylated TorR activates the transcription of the torCAD operon by binding to four decameric boxes located in the torCAD promoter. Box1, 2 and 4 contain the DNA sequence 5'-CTGTTCATAT-3' and box3 contains the DNA sequence 5'-CCGTTCATCC-3'. Phosphorylated as well as unphosphorylated TorR negatively regulates its own expression by binding to box1 and 2. The sequence is that of TorCAD operon transcriptional regulatory protein TorR (torR) from Escherichia coli O157:H7.